A 76-amino-acid polypeptide reads, in one-letter code: Defensin-like protein 122 (76 aa).

Positions 1–25 (MSKTTVIAIFMVVLVLGLVTKETQG) are cleaved as a signal peptide. 4 cysteine pairs are disulfide-bonded: C29–C74, C39–C60, C44–C68, and C48–C70.

Belongs to the DEFL family. In terms of tissue distribution, expressed in flower buds, but not in stems, roots or rosette leaves.

Its subcellular location is the secreted. The protein is Defensin-like protein 122 (LCR30) of Arabidopsis thaliana (Mouse-ear cress).